A 276-amino-acid chain; its full sequence is Bifunctional protein FolD (276 aa).

NADP(+) is bound by residues N157–S159, S182, and I223.

This sequence belongs to the tetrahydrofolate dehydrogenase/cyclohydrolase family. In terms of assembly, homodimer.

The catalysed reaction is (6R)-5,10-methylene-5,6,7,8-tetrahydrofolate + NADP(+) = (6R)-5,10-methenyltetrahydrofolate + NADPH. The enzyme catalyses (6R)-5,10-methenyltetrahydrofolate + H2O = (6R)-10-formyltetrahydrofolate + H(+). It participates in one-carbon metabolism; tetrahydrofolate interconversion. Its function is as follows. Catalyzes the oxidation of 5,10-methylenetetrahydrofolate to 5,10-methenyltetrahydrofolate and then the hydrolysis of 5,10-methenyltetrahydrofolate to 10-formyltetrahydrofolate. The chain is Bifunctional protein FolD from Thermoplasma acidophilum (strain ATCC 25905 / DSM 1728 / JCM 9062 / NBRC 15155 / AMRC-C165).